The sequence spans 285 residues: Polyamine aminopropyltransferase (285 aa).

The 237-residue stretch at 5–241 folds into the PABS domain; the sequence is QDWFTESYPD…GWWSATMAGK (237 aa). S-methyl-5'-thioadenosine is bound at residue glutamine 35. Spermidine is bound by residues histidine 66 and aspartate 90. S-methyl-5'-thioadenosine-binding positions include aspartate 110 and 141 to 142; that span reads DG. The Proton acceptor role is filled by aspartate 160. A spermidine-binding site is contributed by 160 to 163; sequence DSTD. Residue proline 167 participates in S-methyl-5'-thioadenosine binding.

This sequence belongs to the spermidine/spermine synthase family. Homodimer or homotetramer.

It localises to the cytoplasm. The catalysed reaction is S-adenosyl 3-(methylsulfanyl)propylamine + putrescine = S-methyl-5'-thioadenosine + spermidine + H(+). It functions in the pathway amine and polyamine biosynthesis; spermidine biosynthesis; spermidine from putrescine: step 1/1. Catalyzes the irreversible transfer of a propylamine group from the amino donor S-adenosylmethioninamine (decarboxy-AdoMet) to putrescine (1,4-diaminobutane) to yield spermidine. This chain is Polyamine aminopropyltransferase, found in Methylococcus capsulatus (strain ATCC 33009 / NCIMB 11132 / Bath).